A 201-amino-acid chain; its full sequence is Lipopolysaccharide core heptose(II)-phosphate phosphatase (201 aa).

Residues 1–35 form the signal peptide; sequence MLAFTLRFIKNKRYFAILAGALVIIAGLTSQHAWS.

This sequence belongs to the phosphoglycerate mutase family. Ais subfamily.

Its subcellular location is the periplasm. It functions in the pathway bacterial outer membrane biogenesis; lipopolysaccharide metabolism. Functionally, catalyzes the dephosphorylation of heptose(II) of the outer membrane lipopolysaccharide core. The protein is Lipopolysaccharide core heptose(II)-phosphate phosphatase of Salmonella enteritidis PT4 (strain P125109).